The primary structure comprises 134 residues: Phosphoribosyl-AMP cyclohydrolase (134 aa).

Mg(2+) is bound at residue aspartate 78. Cysteine 79 serves as a coordination point for Zn(2+). Mg(2+) contacts are provided by aspartate 80 and aspartate 82. 2 residues coordinate Zn(2+): cysteine 96 and cysteine 103.

Belongs to the PRA-CH family. As to quaternary structure, homodimer. Mg(2+) serves as cofactor. The cofactor is Zn(2+).

It is found in the cytoplasm. It carries out the reaction 1-(5-phospho-beta-D-ribosyl)-5'-AMP + H2O = 1-(5-phospho-beta-D-ribosyl)-5-[(5-phospho-beta-D-ribosylamino)methylideneamino]imidazole-4-carboxamide. Its pathway is amino-acid biosynthesis; L-histidine biosynthesis; L-histidine from 5-phospho-alpha-D-ribose 1-diphosphate: step 3/9. In terms of biological role, catalyzes the hydrolysis of the adenine ring of phosphoribosyl-AMP. This Cupriavidus necator (strain ATCC 17699 / DSM 428 / KCTC 22496 / NCIMB 10442 / H16 / Stanier 337) (Ralstonia eutropha) protein is Phosphoribosyl-AMP cyclohydrolase.